The chain runs to 331 residues: Homoserine kinase (331 aa).

The protein belongs to the pseudomonas-type ThrB family.

It carries out the reaction L-homoserine + ATP = O-phospho-L-homoserine + ADP + H(+). The protein operates within amino-acid biosynthesis; L-threonine biosynthesis; L-threonine from L-aspartate: step 4/5. The sequence is that of Homoserine kinase from Burkholderia thailandensis (strain ATCC 700388 / DSM 13276 / CCUG 48851 / CIP 106301 / E264).